A 493-amino-acid polypeptide reads, in one-letter code: 3-octaprenyl-4-hydroxybenzoate carboxy-lyase (493 aa).

Asn172 contacts Mn(2+). Prenylated FMN is bound by residues 175–177, 189–191, and 194–195; these read IYR, RWL, and RG. A Mn(2+)-binding site is contributed by Glu238. Asp287 acts as the Proton donor in catalysis.

It belongs to the UbiD family. In terms of assembly, homohexamer. It depends on prenylated FMN as a cofactor. Mn(2+) serves as cofactor.

It is found in the cell membrane. It carries out the reaction a 4-hydroxy-3-(all-trans-polyprenyl)benzoate + H(+) = a 2-(all-trans-polyprenyl)phenol + CO2. The protein operates within cofactor biosynthesis; ubiquinone biosynthesis. Catalyzes the decarboxylation of 3-octaprenyl-4-hydroxy benzoate to 2-octaprenylphenol, an intermediate step in ubiquinone biosynthesis. The protein is 3-octaprenyl-4-hydroxybenzoate carboxy-lyase of Shewanella woodyi (strain ATCC 51908 / MS32).